A 373-amino-acid polypeptide reads, in one-letter code: Ribonuclease D (373 aa).

A 3'-5' exonuclease domain is found at 3–171 (YQLITTDAGL…MAKRLVQETE (169 aa)). Positions 210-289 (RPRQLGCLQK…AEAAELEESA (80 aa)) constitute an HRDC domain.

This sequence belongs to the RNase D family. It depends on a divalent metal cation as a cofactor.

Its subcellular location is the cytoplasm. The enzyme catalyses Exonucleolytic cleavage that removes extra residues from the 3'-terminus of tRNA to produce 5'-mononucleotides.. In terms of biological role, exonuclease involved in the 3' processing of various precursor tRNAs. Initiates hydrolysis at the 3'-terminus of an RNA molecule and releases 5'-mononucleotides. The chain is Ribonuclease D from Serratia proteamaculans (strain 568).